Reading from the N-terminus, the 250-residue chain is MNLEALPKYYSPKSPKLSDDAPATGTGCLTITDVMAAQGMVQSKAPLGLALFLAKVGVQDPQFAIEGLLNYAMALDNPTLNKLSEEIRLQIIPYLVSFAFADYSRSAASKARCEHCSGTGFYNVLREVVKHYRRGESVIKEEWVKELCQHCHGKGEASTACRGCKGKGIVLDEKRTRFHGVPVYKICGRCNGNRFSRLPTTLARRHVQKLVPDLTDYQWYKGYADVIGKLVTKCWQEEAYAEAQLRKVTR.

It belongs to the phage antitermination Q type 2 family.

Its function is as follows. Positively regulate expression of some phage genes. Bacterial host RNA polymerase modified by antitermination proteins transcribes through termination sites that otherwise prevent expression of the regulated genes. This is Prophage antitermination protein Q homolog QuuQ (quuQ) from Escherichia coli (strain K12).